Consider the following 450-residue polypeptide: MIHPIQFTLTNHDGTLLFCVIKNTIFAYKTNGEDGHLDLAGEWVDDYDSAELIKAKVEKEQQRRLAENAAKKLKTNEGEAIERPGNQRRVPLPGKDPKVPVPGPGAPPVYQYIRCLQLSHDEKMLVACTDSDKAAVFFRIELHKDNCLTLFKRQPFPKRPNAVTFADDDAKLLLADKFGDVYAVDSVGEPEKKDPEPILGHVSMLTDIALVTDTKKSYVITADRDEHIKISHYPQSFVIDKWLFGHKEFVSSLCVPEWQSSMLFSAGGDSFIATWDWQKGLLMSSFDYSTIVEPHLTDAHLPPARFLANDGSDRREASISKLLTFKDLPYLVAVPEMTKIVLLLQWDATSGELILSQTLALPLNVVSATVTSANHKLILSLDNREQPGKNFVKIFTLENGKFEEEQAASSSVDEAIVRNLSERPEVQTTVDDIYPLYHVSQLRKRGEHYS.

Residues 69–82 show a composition bias toward basic and acidic residues; the sequence is AAKKLKTNEGEAIE. The disordered stretch occupies residues 69–103; the sequence is AAKKLKTNEGEAIERPGNQRRVPLPGKDPKVPVPG. WD repeat units lie at residues 108 to 147, 200 to 241, and 245 to 285; these read PVYQYIRCLQLSHDEKMLVACTDSDKAAVFFRIELHKDNC, GHVS…VIDK, and GHKE…LMSS.

This sequence belongs to the WD repeat TRM82 family. In terms of assembly, forms a heterodimer with the catalytic subunit TRM8.

It localises to the nucleus. It functions in the pathway tRNA modification; N(7)-methylguanine-tRNA biosynthesis. Its function is as follows. Required for the formation of N(7)-methylguanine at position 46 (m7G46) in tRNA. In the complex, it is required to stabilize and induce conformational changes of the catalytic subunit. The protein is tRNA (guanine-N(7)-)-methyltransferase non-catalytic subunit TRM82 of Eremothecium gossypii (strain ATCC 10895 / CBS 109.51 / FGSC 9923 / NRRL Y-1056) (Yeast).